Reading from the N-terminus, the 218-residue chain is Probable transaldolase (218 aa).

Lysine 87 functions as the Schiff-base intermediate with substrate in the catalytic mechanism.

It belongs to the transaldolase family. Type 3B subfamily.

The protein resides in the cytoplasm. The catalysed reaction is D-sedoheptulose 7-phosphate + D-glyceraldehyde 3-phosphate = D-erythrose 4-phosphate + beta-D-fructose 6-phosphate. The protein operates within carbohydrate degradation; pentose phosphate pathway; D-glyceraldehyde 3-phosphate and beta-D-fructose 6-phosphate from D-ribose 5-phosphate and D-xylulose 5-phosphate (non-oxidative stage): step 2/3. Transaldolase is important for the balance of metabolites in the pentose-phosphate pathway. The protein is Probable transaldolase of Flavobacterium psychrophilum (strain ATCC 49511 / DSM 21280 / CIP 103535 / JIP02/86).